Reading from the N-terminus, the 56-residue chain is Large ribosomal subunit protein eL40 (56 aa).

Belongs to the eukaryotic ribosomal protein eL40 family.

The chain is Large ribosomal subunit protein eL40 from Sulfurisphaera tokodaii (strain DSM 16993 / JCM 10545 / NBRC 100140 / 7) (Sulfolobus tokodaii).